The sequence spans 151 residues: Aspartate carbamoyltransferase regulatory chain (151 aa).

Zn(2+)-binding residues include C108, C113, C138, and C141.

This sequence belongs to the PyrI family. In terms of assembly, contains catalytic and regulatory chains. Zn(2+) is required as a cofactor.

Functionally, involved in allosteric regulation of aspartate carbamoyltransferase. In Pyrobaculum arsenaticum (strain DSM 13514 / JCM 11321 / PZ6), this protein is Aspartate carbamoyltransferase regulatory chain.